Consider the following 1156-residue polypeptide: DNA-directed RNA polymerase 133 kDa polypeptide (1156 aa).

This sequence belongs to the RNA polymerase beta chain family. In terms of assembly, the DNA-dependent RNA polymerase used for intermediate and late genes expression consists of eight subunits 147 kDa, 133 kDa, 35 kDa, 30 kDa, 22 kDa, 19 kDa, 18 kDa and 7 kDa totalling more than 500 kDa in mass. The same holoenzyme, with the addition of the transcription-specificity factor RAP94, is used for early gene expression.

It localises to the virion. It carries out the reaction RNA(n) + a ribonucleoside 5'-triphosphate = RNA(n+1) + diphosphate. Functionally, part of the DNA-dependent RNA polymerase which catalyzes the transcription of viral DNA into RNA using the four ribonucleoside triphosphates as substrates. Responsible for the transcription of early, intermediate and late genes. DNA-dependent RNA polymerase associates with the early transcription factor (ETF), itself composed of D6 and A7, thereby allowing the early genes transcription. Late transcription, and probably also intermediate transcription, require newly synthesized RNA polymerase. The sequence is that of DNA-directed RNA polymerase 133 kDa polypeptide (RPO132) from Homo sapiens (Human).